A 605-amino-acid chain; its full sequence is Aspartate--tRNA(Asp/Asn) ligase (605 aa).

Glutamate 183 is a binding site for L-aspartate. The segment at 207–210 (QLFK) is aspartate. Arginine 229 is an L-aspartate binding site. Residues 229–231 (RDE) and glutamine 238 contribute to the ATP site. Histidine 457 is a binding site for L-aspartate. An ATP-binding site is contributed by glutamate 497. Arginine 504 is a binding site for L-aspartate. 549 to 552 (GLDR) is a binding site for ATP.

The protein belongs to the class-II aminoacyl-tRNA synthetase family. Type 1 subfamily. Homodimer.

The protein resides in the cytoplasm. It carries out the reaction tRNA(Asx) + L-aspartate + ATP = L-aspartyl-tRNA(Asx) + AMP + diphosphate. Aspartyl-tRNA synthetase with relaxed tRNA specificity since it is able to aspartylate not only its cognate tRNA(Asp) but also tRNA(Asn). Reaction proceeds in two steps: L-aspartate is first activated by ATP to form Asp-AMP and then transferred to the acceptor end of tRNA(Asp/Asn). This is Aspartate--tRNA(Asp/Asn) ligase from Persephonella marina (strain DSM 14350 / EX-H1).